We begin with the raw amino-acid sequence, 312 residues long: Taste receptor type 2 member 103 (312 aa).

At 1–16 (MVVTMRAALRLMLIST) the chain is on the extracellular side. The helical transmembrane segment at 17 to 37 (VSLELIIGILANVFIALVNII) threads the bilayer. Topologically, residues 38 to 65 (DWIKRGKISAVDKIYMGLAISRTAFVLS) are cytoplasmic. A helical membrane pass occupies residues 66-86 (VITGFLIAFLDPASLGIGIMI). Over 87–92 (RLLTMS) the chain is Extracellular. The chain crosses the membrane as a helical span at residues 93–113 (WTVTNHFSVWFATCLSIFYFL). The Cytoplasmic segment spans residues 114-133 (KITNFSNTVFLALKWKVKKV). The chain crosses the membrane as a helical span at residues 134-154 (VSVTLVVSLIILFINVIVIHI). Over 155–184 (YTDRFQVNMVQKCGANNTLRAYGLFLSIST) the chain is Extracellular. Asparagine 170 carries N-linked (GlcNAc...) asparagine glycosylation. Residues 185-205 (VFTFIPFTASLTMFLLLIFSL) traverse the membrane as a helical segment. At 206–229 (WRHLKTMHHNATGSRDVSTVAHIK) the chain is on the cytoplasmic side. Residues 230–250 (GLQTVVAFLLLYTVFAMSLFS) traverse the membrane as a helical segment. Residues 251–264 (QSLSIDAQHTNLLS) are Extracellular-facing. Residues 265 to 285 (HFLRCIGVAFPSGHSCALILG) form a helical membrane-spanning segment. At 286–312 (NNKLRQASLSVIFWLRCKYKHTENQGP) the chain is on the cytoplasmic side.

Belongs to the G-protein coupled receptor T2R family.

The protein resides in the membrane. In terms of biological role, gustducin-coupled receptor implicated in the perception of bitter compounds in the oral cavity and the gastrointestinal tract. Signals through PLCB2 and the calcium-regulated cation channel TRPM5. This Rattus norvegicus (Rat) protein is Taste receptor type 2 member 103.